The chain runs to 145 residues: Hemoglobin subunit beta (145 aa).

The Globin domain occupies 1–145 (MLTAEEKAAV…VANALAHRYH (145 aa)). Thr11 is subject to Phosphothreonine. Residue Ser43 is modified to Phosphoserine. Lys58 is modified (N6-acetyllysine). His62 is a heme b binding site. The residue at position 81 (Lys81) is an N6-acetyllysine. Residue His91 participates in heme b binding. Residue Cys92 is modified to S-nitrosocysteine.

Belongs to the globin family. As to quaternary structure, heterotetramer of two alpha chains and two beta chains. In terms of tissue distribution, red blood cells.

Functionally, involved in oxygen transport from the lung to the various peripheral tissues. Its function is as follows. Functions as an endogenous inhibitor of enkephalin-degrading enzymes such as DPP3, and may thereby play a role as a regulator of pain and inflammation. This is Hemoglobin subunit beta (HBB) from Bos taurus (Bovine).